Here is a 307-residue protein sequence, read N- to C-terminus: tRNA-cytidine(32) 2-sulfurtransferase (307 aa).

Residues S44 to S49 carry the PP-loop motif motif. Positions 119, 122, and 210 each coordinate [4Fe-4S] cluster.

The protein belongs to the TtcA family. As to quaternary structure, homodimer. Requires Mg(2+) as cofactor. The cofactor is [4Fe-4S] cluster.

It localises to the cytoplasm. The enzyme catalyses cytidine(32) in tRNA + S-sulfanyl-L-cysteinyl-[cysteine desulfurase] + AH2 + ATP = 2-thiocytidine(32) in tRNA + L-cysteinyl-[cysteine desulfurase] + A + AMP + diphosphate + H(+). The protein operates within tRNA modification. In terms of biological role, catalyzes the ATP-dependent 2-thiolation of cytidine in position 32 of tRNA, to form 2-thiocytidine (s(2)C32). The sulfur atoms are provided by the cysteine/cysteine desulfurase (IscS) system. The sequence is that of tRNA-cytidine(32) 2-sulfurtransferase from Aliivibrio salmonicida (strain LFI1238) (Vibrio salmonicida (strain LFI1238)).